Consider the following 525-residue polypeptide: MGIFFISLVLIVLASVVFFVGGFFLGRYFLERIGTTKILEAEERAVQIVQEAQKEANEYKELKVSEVNQEWKKKRREFDQEVVIKNNKFNQMQKQVLQKEGQLKKQSQDLRDMERKLQDQRKEIEQTMETVNLRSSELERITLEQNQRLESISNLQADEARQMLVDNMLAKAREEATETIHQIHEEAEQQAERLAEKTLLTAIQRISFEQATENALSVVHIQSDELKGRIIGREGRNIKAFENATGVDIIVDDTPEVVILSCFDPLRRELAKLTLQKLLVDGIIHPVAIEKAYEDAKKEIDDVIMSAGEETISSLQIPDMPAEVVGLIGKMKYHTVYGQNLLQHSREVAMLAGLMASELKLDARVAKRAALLHDIGLVLPESDEPHAIAGRNFLKKFNESAVVLNAVAAHHGDVVKESPIAELVDAANVISLSRPGARGAVTADGNVKRLESLEEIAKGFPGVLKTYALQAGREIRVIVEGDNVSDSQADVLAHDIARKIESEVQYPGQIKVSIIRERRSIAYAK.

Residues 3–23 traverse the membrane as a helical segment; that stretch reads IFFISLVLIVLASVVFFVGGF. The KH domain occupies 215 to 300; sequence ALSVVHIQSD…KAYEDAKKEI (86 aa). The region spanning 341-433 is the HD domain; it reads LLQHSREVAM…VDAANVISLS (93 aa).

The protein belongs to the RNase Y family.

Its subcellular location is the cell membrane. Endoribonuclease that initiates mRNA decay. This chain is Ribonuclease Y, found in Chlorobium phaeobacteroides (strain DSM 266 / SMG 266 / 2430).